Consider the following 616-residue polypeptide: Chaperone protein HscA (616 aa).

Belongs to the heat shock protein 70 family.

In terms of biological role, chaperone involved in the maturation of iron-sulfur cluster-containing proteins. Has a low intrinsic ATPase activity which is markedly stimulated by HscB. Involved in the maturation of IscU. This chain is Chaperone protein HscA, found in Salmonella paratyphi C (strain RKS4594).